The chain runs to 688 residues: Polyribonucleotide nucleotidyltransferase (688 aa).

Positions 484 and 490 each coordinate Mg(2+). Residues 550–609 (PTTEIFNVAPDKIIEIIGQGGRVIREIVEKFEVKIDLNKPSGEVKIMGNKERVLKTKEFI) enclose the KH domain. The S1 motif domain occupies 626-688 (DEVLEAQVKR…NKGKIALDLA (63 aa)).

The protein belongs to the polyribonucleotide nucleotidyltransferase family. Requires Mg(2+) as cofactor.

It is found in the cytoplasm. The catalysed reaction is RNA(n+1) + phosphate = RNA(n) + a ribonucleoside 5'-diphosphate. Its function is as follows. Involved in mRNA degradation. Catalyzes the phosphorolysis of single-stranded polyribonucleotides processively in the 3'- to 5'-direction. The chain is Polyribonucleotide nucleotidyltransferase from Helicobacter acinonychis (strain Sheeba).